A 228-amino-acid chain; its full sequence is Lipoprotein LpqN (228 aa).

The signal sequence occupies residues 1 to 19 (MKHFTAAVATVALSLALAG). The N-palmitoyl cysteine moiety is linked to residue C20. C20 carries the S-diacylglycerol cysteine lipid modification. The tract at residues 26–53 (TDSAPTTSPTTTSPTTSTTTTSATTSAQ) is disordered. Low complexity predominate over residues 28–52 (SAPTTSPTTTSPTTSTTTTSATTSA).

Interacts with the periplasmic loop domains of the mycolate transporters MmpL3 and MmpL11. Also interacts with secreted cell envelope biosynthetic enzymes such as Ag85A. These interactions are weak and may require a putative mycobacterial adapter protein or molecule. Interacts with human ubiquitin ligase CBL.

The protein localises to the cell membrane. It localises to the secreted. Functionally, involved in cell envelope biogenesis. May act as a membrane fusion protein, connecting MmpL transporters with periplasmic proteins, and play a role in cell envelope lipid changes during biofilm maturation. Its function is as follows. Is also a virulence factor required for intracellular survival. Associates with CBL, a host ubiquitin ligase, and probably blocks the normal functions of CBL and disturbs CBL-mediated antibacterial activity. Interaction counteracts antibacterial defense but causes a reciprocal enhancement of antiviral defense. This chain is Lipoprotein LpqN, found in Mycobacterium tuberculosis (strain ATCC 25618 / H37Rv).